A 142-amino-acid polypeptide reads, in one-letter code: Putative mating-type transcription factor (142 aa).

It is found in the nucleus. This Eremothecium gossypii (strain ATCC 10895 / CBS 109.51 / FGSC 9923 / NRRL Y-1056) (Yeast) protein is Putative mating-type transcription factor.